A 338-amino-acid polypeptide reads, in one-letter code: MKTDDFDYKLPEELIASYPLENRDASRLLKLNKQTGEIADYKFTDFIDFINPGDLLVFNNSKVMLARLYGSKTTGAKLEYLIERIKNPKLFETHIKANRSPAIGSEIYVEDTLAKVLDKDGGMYLLEIQGDKDIYQLMEEFGHIPLPPYMKRDDEEFDAERYQTVYAQDLGSVAAPTAGLHFSKELMQQIKDKGVDIAYITLHVGSGTFKPVQVDDVESHKMHAEVISVPVEVCQKIRQTKENGGRVIAIGTTSVRSLETAGQNGQIEPYQGETDIFLYPGKKFNVVDAMITNFHLPKSTLIMLVSAFADKEKIIKAYEHAIAERYRFFSYGDAMFIF.

It belongs to the QueA family. In terms of assembly, monomer.

The protein resides in the cytoplasm. The enzyme catalyses 7-aminomethyl-7-carbaguanosine(34) in tRNA + S-adenosyl-L-methionine = epoxyqueuosine(34) in tRNA + adenine + L-methionine + 2 H(+). It participates in tRNA modification; tRNA-queuosine biosynthesis. Transfers and isomerizes the ribose moiety from AdoMet to the 7-aminomethyl group of 7-deazaguanine (preQ1-tRNA) to give epoxyqueuosine (oQ-tRNA). The protein is S-adenosylmethionine:tRNA ribosyltransferase-isomerase of Francisella tularensis subsp. tularensis (strain WY96-3418).